The sequence spans 1008 residues: ATP-dependent zinc metalloprotease FTSH 12, chloroplastic (1008 aa).

The N-terminal 49 residues, 1–49 (MEIAISYKPNPLISSSTQLLKRSKSFGLVRFPAKYGLGATRKKQLFRVY), are a transit peptide targeting the chloroplast. 2 helical membrane-spanning segments follow: residues 154-174 (AALFIYAFALLLSCQRVYVAI) and 427-447 (IHYFMKVFIALLPGILILWFI). 533–540 (GPPGTGKT) lines the ATP pocket. H769 provides a ligand contact to Zn(2+). E770 is an active-site residue. Zn(2+) contacts are provided by H773 and D849.

In the N-terminal section; belongs to the AAA ATPase family. This sequence in the C-terminal section; belongs to the peptidase M41 family. Zn(2+) is required as a cofactor.

It localises to the plastid. Its subcellular location is the chloroplast thylakoid membrane. Probable ATP-dependent zinc metallopeptidase. The chain is ATP-dependent zinc metalloprotease FTSH 12, chloroplastic (FTSH12) from Arabidopsis thaliana (Mouse-ear cress).